A 147-amino-acid polypeptide reads, in one-letter code: MEKQVIQSVGFRNIKNGNGEITGFQFKVKLPYYRGVFLSQIRPGTLFVDGQKIEKDQITWTINGEEYTNQEMRGDFKTHWATTKPAVLKVKMPGGLAQGYHDLKYGFCFTSSYMPPIIQDGLDPDKESMVYMPEFGHHVNERRLLIV.

This sequence belongs to the C-glycoside deglycosidase beta subunit family. In terms of assembly, heterooctamer composed of four alpha subunits (DfgA) and four beta subunits (DfgB). Requires Mn(2+) as cofactor.

The enzyme catalyses 3''-dehydroisoorientin = 1,5-anhydro-D-erythro-hex-1-en-3-ulose + luteolin. It catalyses the reaction 3''-dehydroisovitexin = 1,5-anhydro-D-erythro-hex-1-en-3-ulose + apigenin. With respect to regulation, activity is strongly reduced in the presence of chelating agents. Functionally, carbon-carbon bond-cleaving enzyme which participates in the metabolism of C-glycosides. Acts on the C6-glycosylated compounds 3''-dehydroisoorientin (3''-oxo-homoorientin) and 3''-dehydroisovitexin (3''-oxo-isovitexin). This is C-glycoside deglycosidase beta subunit from Eubacterium cellulosolvens (strain ATCC 43171 / JCM 9499 / 6) (Cillobacterium cellulosolvens).